The primary structure comprises 197 residues: Peptide deformylase (197 aa).

Residues Cys106 and His148 each coordinate Fe cation. The active site involves Glu149. Residue His152 participates in Fe cation binding.

It belongs to the polypeptide deformylase family. It depends on Fe(2+) as a cofactor.

It catalyses the reaction N-terminal N-formyl-L-methionyl-[peptide] + H2O = N-terminal L-methionyl-[peptide] + formate. Removes the formyl group from the N-terminal Met of newly synthesized proteins. Requires at least a dipeptide for an efficient rate of reaction. N-terminal L-methionine is a prerequisite for activity but the enzyme has broad specificity at other positions. In Mycobacterium bovis (strain ATCC BAA-935 / AF2122/97), this protein is Peptide deformylase.